A 161-amino-acid chain; its full sequence is Small ribosomal subunit protein uS19 (161 aa).

Residues methionine 1–glutamine 19 are compositionally biased toward basic residues. Positions methionine 1–arginine 26 are disordered.

It belongs to the universal ribosomal protein uS19 family.

Its function is as follows. Protein S19 forms a complex with S13 that binds strongly to the 16S ribosomal RNA. The sequence is that of Small ribosomal subunit protein uS19 from Methanococcus maripaludis (strain DSM 14266 / JCM 13030 / NBRC 101832 / S2 / LL).